Here is a 705-residue protein sequence, read N- to C-terminus: GATOR2 complex protein WDR24 (705 aa).

WD repeat units follow at residues 1–28 (MDEN…RNKQ), 34–74 (EHKR…SVST), 77–117 (GQSE…RYER), 121–161 (AHNG…AKEI), 165–207 (QTIA…IPSA), and 211–254 (EHKD…IDRA). The segment at 633-655 (NCSNCKRPMSNRGWICDRCRQCA) adopts a C4-type zinc-finger fold. 15 residues coordinate Zn(2+): Cys-634, Cys-637, Cys-648, Cys-651, Cys-658, Cys-661, Cys-672, Cys-675, His-677, His-680, His-683, Cys-694, Cys-698, His-700, and Cys-702. An RING-type; atypical zinc finger spans residues 656-705 (SMCAVCHHVVKGLFVWCQGCSHGGHLQHIMKWLETSSHCPAGCGHLCEYT).

It belongs to the WD repeat WDR24 family. As to quaternary structure, component of the GATOR2 subcomplex, composed of MIOS, SEC13, SEH1L, WDR24 and WDR59. The GATOR2 complex interacts with CASTOR1 and CASTOR2; the interaction is negatively regulated by arginine. The GATOR2 complex interacts with SESN1, SESN2 and SESN3; the interaction is negatively regulated by amino acids.

It is found in the lysosome membrane. The enzyme catalyses S-ubiquitinyl-[E2 ubiquitin-conjugating enzyme]-L-cysteine + [acceptor protein]-L-lysine = [E2 ubiquitin-conjugating enzyme]-L-cysteine + N(6)-ubiquitinyl-[acceptor protein]-L-lysine.. It functions in the pathway protein modification; protein ubiquitination. Its activity is regulated as follows. The GATOR2 complex is negatively regulated by the upstream amino acid sensors CASTOR1 and SESN2, which sequester the GATOR2 complex in absence of amino acids. In the presence of abundant amino acids, GATOR2 is released from CASTOR1 and SESN2 and activated. Catalytic component of the GATOR2 complex, a multiprotein complex that acts as an activator of the amino acid-sensing branch of the mTORC1 signaling pathway. The GATOR2 complex indirectly activates mTORC1 through the inhibition of the GATOR1 subcomplex. GATOR2 probably acts as an E3 ubiquitin-protein ligase toward GATOR1. In the presence of abundant amino acids, the GATOR2 complex mediates ubiquitination of the NPRL2 core component of the GATOR1 complex, leading to GATOR1 inactivation. In the absence of amino acids, GATOR2 is inhibited, activating the GATOR1 complex. In addition to its role in regulation of the mTORC1 complex, promotes the acidification of lysosomes and facilitates autophagic flux. Within the GATOR2 complex, WDR24 constitutes the catalytic subunit that mediates 'Lys-6'-linked ubiquitination of NPRL2. This chain is GATOR2 complex protein WDR24, found in Gallus gallus (Chicken).